The following is a 206-amino-acid chain: Guanylate kinase (206 aa).

In terms of domain architecture, Guanylate kinase-like spans 7–185 (GIVLVLCAPS…AYDELRAAYL (179 aa)). 14–21 (APSGTGKT) provides a ligand contact to ATP.

Belongs to the guanylate kinase family.

The protein resides in the cytoplasm. The enzyme catalyses GMP + ATP = GDP + ADP. Functionally, essential for recycling GMP and indirectly, cGMP. The chain is Guanylate kinase from Oleidesulfovibrio alaskensis (strain ATCC BAA-1058 / DSM 17464 / G20) (Desulfovibrio alaskensis).